Consider the following 1033-residue polypeptide: MAESDSTDFDLLWYLENLSDKEFQSFKKYLARKILDFKLPQFPLIQMTKEELANVLPISYEGQYIWNMLFSIFSMMRKEDLCRKIIGRRNRNQEACKAVMRRKFMLQWESHTFGKFHYKFFRDVSSDVFYILQLAYDSTSYYSANNLNVFLMGERASGKTIVINLAVLRWIKGEMWQNMISYVVHLTAHEINQMTNSSLAELIAKDWPDGQAPIADILSDPKKLLFILEDLDNIRFELNVNESALCSNSTQKVPIPVLLVSLLKRKMAPGCWFLISSRPTRGNNVKTFLKEVDCCTTLQLSNGKREIYFNSFFKDRQRASAALQLVHEDEILVGLCRVAILCWITCTVLKRQMDKGRDFQLCCQTPTDLHAHFLADALTSEAGLTANQYHLGLLKRLCLLAAGGLFLSTLNFSGEDLRCVGFTEADVSVLQAANILLPSNTHKDRYKFIHLNVQEFCTAIAFLMAVPNYLIPSGSREYKEKREQYSDFNQVFTFIFGLLNANRRKILETSFGYQLPMVDSFKWYSVGYMKHLDRDPEKLTHHMPLFYCLYENREEEFVKTIVDALMEVTVYLQSDKDMMVSLYCLDYCCHLRTLKLSVQRIFQNKEPLIRPTASQMKSLVYWREICSLFYTMESLRELHIFDNDLNGISERILSKALEHSSCKLRTLKLSYVSTASGFEDLLKALARNRSLTYLSINCTSISLNMFSLLHDILHEPTCQISHLSLMKCDLRASECEEIASLLISGGSLRKLTLSSNPLRSDGMNILCDALLHPNCTLISLVLVFCCLTENCCSALGRVLLFSPTLRQLDLCVNRLKNYGVLHVTFPLLFPTCQLEELHLSGCFFSSDICQYIAIVIATNEKLRSLEIGSNKIEDAGMQLLCGGLRHPNCMLVNIGLEECMLTSACCRSLASVLTTNKTLERLNLLQNHLGNDGVAKLLESLISPDCVLKVVGLPLTGLNTQTQQLLMTVKERKPSLIFLSETWSLKEGREIGVTPASQPGSIIPNSNLDYMFFKFPRMSAAMRTSNTASRQPL.

A Pyrin domain is found at 1–91; that stretch reads MAESDSTDFD…CRKIIGRRNR (91 aa). In terms of domain architecture, NACHT spans 147-470; the sequence is LNVFLMGERA…AFLMAVPNYL (324 aa). 153 to 160 provides a ligand contact to ATP; that stretch reads GERASGKT. 6 LRR repeats span residues 588–611, 632–655, 745–768, 802–827, 859–882, and 919–944; these read CCHL…LIRP, MESL…ILSK, GGSL…ILCD, SPTL…TFPL, NEKL…LLCG, and LERL…LISP.

The protein belongs to the NLRP family.

Involved in inflammation. The sequence is that of NACHT, LRR and PYD domains-containing protein 11 (NLRP11) from Homo sapiens (Human).